A 567-amino-acid chain; its full sequence is Urease subunit alpha (567 aa).

The Urease domain occupies 129–567 (GGIDTHIHFI…LPMAQRYFLF (439 aa)). Positions 134, 136, and 217 each coordinate Ni(2+). At K217 the chain carries N6-carboxylysine. A substrate-binding site is contributed by H219. Ni(2+)-binding residues include H246 and H272. The active-site Proton donor is H320. D360 is a binding site for Ni(2+).

This sequence belongs to the metallo-dependent hydrolases superfamily. Urease alpha subunit family. Probable heterotrimer of UreA (gamma), UreB (beta) and UreC (alpha) subunits. Three heterotrimers associate to form the active enzyme. The trimeric urease interacts with an accessory complex composed of UreD, UreF and UreG, which is required for the assembly of the nickel containing metallocenter of UreC. The UreE protein may also play a direct role in nickel transfer to the urease apoprotein. Requires Ni cation as cofactor. Post-translationally, carboxylation allows a single lysine to coordinate two nickel ions.

Its subcellular location is the cytoplasm. The enzyme catalyses urea + 2 H2O + H(+) = hydrogencarbonate + 2 NH4(+). The protein operates within nitrogen metabolism; urea degradation; CO(2) and NH(3) from urea (urease route): step 1/1. The chain is Urease subunit alpha from Proteus mirabilis (strain HI4320).